The primary structure comprises 165 residues: C-phycoerythrin class 2 subunit alpha (165 aa).

Phycourobilin contacts are provided by Cys-75, Cys-83, and Cys-140.

Belongs to the phycobiliprotein family. Heterodimer of an alpha and a beta chain. Contains three covalently linked phycourobilin chromophores.

It localises to the cellular thylakoid membrane. Its function is as follows. Light-harvesting photosynthetic bile pigment-protein from the phycobiliprotein complex. This chain is C-phycoerythrin class 2 subunit alpha (mpeA), found in Synechococcus sp. (strain WH8103).